The chain runs to 492 residues: Fumarate hydratase 1, mitochondrial (492 aa).

A mitochondrion-targeting transit peptide spans 1-28 (MSIYVASRRLSGGTTVTALRYATSLRSY). Residues 127–129 (SGT), 157–160 (HPND), 167–169 (SSN), and Thr-215 contribute to the substrate site. Catalysis depends on His-216, which acts as the Proton donor/acceptor. Ser-346 is an active-site residue. Substrate is bound by residues Ser-347 and 352-354 (KVN).

It belongs to the class-II fumarase/aspartase family. Fumarase subfamily. In terms of assembly, homotetramer.

It localises to the mitochondrion. It catalyses the reaction (S)-malate = fumarate + H2O. It participates in carbohydrate metabolism; tricarboxylic acid cycle; (S)-malate from fumarate: step 1/1. Fumarate hydratase activity (fumarate to L-malate) is strongly inhibited by phosphoenolpyruvate, citrate, oxaloacetate, ATP and ADP. Malate dehydratase activity (malate to fumarate) is activated by oxaloacetate, pyruvate, Asn and Gln. Malate dehydratase activity (malate to fumarate) is inhibited by citrate, succinate, ADP, ATP, glucose-6P and phosphoenolpyruvate. Functionally, catalyzes the reversible stereospecific interconversion of fumarate to L-malate. Catalyzes the hydration of fumarate to L-malate in the tricarboxylic acid (TCA) cycle to facilitate a transition step in the production of energy in the form of NADH. This Arabidopsis thaliana (Mouse-ear cress) protein is Fumarate hydratase 1, mitochondrial.